We begin with the raw amino-acid sequence, 637 residues long: ATP-dependent zinc metalloprotease FtsH (637 aa).

Over 1-6 (MNNQGR) the chain is Cytoplasmic. The chain crosses the membrane as a helical span at residues 7 to 27 (SILAWAALFIFVILLFNVFQS). Residues 28-103 (DGLLGVRNNI…VVPLETRMNT (76 aa)) lie on the Periplasmic side of the membrane. The chain crosses the membrane as a helical span at residues 104–124 (FLGFLISWFPMLLLIGVWVFF). At 125 to 637 (MRQMHGGGKA…TKAQKENIAS (513 aa)) the chain is on the cytoplasmic side. Position 195 to 202 (195 to 202 (GPPGTGKT)) interacts with ATP. A Zn(2+)-binding site is contributed by histidine 417. Glutamate 418 is an active-site residue. Histidine 421 and aspartate 495 together coordinate Zn(2+). The tract at residues 617–637 (DKEKLHEKTKTTKAQKENIAS) is disordered.

The protein in the central section; belongs to the AAA ATPase family. It in the C-terminal section; belongs to the peptidase M41 family. As to quaternary structure, homohexamer. Requires Zn(2+) as cofactor.

It localises to the cell inner membrane. Its function is as follows. Acts as a processive, ATP-dependent zinc metallopeptidase for both cytoplasmic and membrane proteins. Plays a role in the quality control of integral membrane proteins. This Rickettsia typhi (strain ATCC VR-144 / Wilmington) protein is ATP-dependent zinc metalloprotease FtsH.